Consider the following 258-residue polypeptide: DNA repair protein RecO (258 aa).

The protein belongs to the RecO family.

Its function is as follows. Involved in DNA repair and RecF pathway recombination. The sequence is that of DNA repair protein RecO from Lactiplantibacillus plantarum (strain ATCC BAA-793 / NCIMB 8826 / WCFS1) (Lactobacillus plantarum).